The sequence spans 490 residues: Betaine aldehyde dehydrogenase (490 aa).

K(+)-binding residues include Thr-26, Ile-27, and Asp-93. 150–152 (GAW) contacts NAD(+). Residue Lys-162 is the Charge relay system of the active site. 176-179 (KPSE) contributes to the NAD(+) binding site. Val-180 is a binding site for K(+). 230 to 233 (GVAS) provides a ligand contact to NAD(+). Leu-246 is a K(+) binding site. The Proton acceptor role is filled by Glu-252. NAD(+) is bound by residues Gly-254, Cys-286, and Glu-387. Cys-286 serves as the catalytic Nucleophile. The residue at position 286 (Cys-286) is a Cysteine sulfenic acid (-SOH). 2 residues coordinate K(+): Lys-457 and Gly-460. Residue Glu-464 is the Charge relay system of the active site.

The protein belongs to the aldehyde dehydrogenase family. In terms of assembly, dimer of dimers. Requires K(+) as cofactor.

The catalysed reaction is betaine aldehyde + NAD(+) + H2O = glycine betaine + NADH + 2 H(+). It participates in amine and polyamine biosynthesis; betaine biosynthesis via choline pathway; betaine from betaine aldehyde: step 1/1. Functionally, involved in the biosynthesis of the osmoprotectant glycine betaine. Catalyzes the irreversible oxidation of betaine aldehyde to the corresponding acid. The sequence is that of Betaine aldehyde dehydrogenase from Escherichia coli (strain 55989 / EAEC).